The sequence spans 317 residues: Ribosomal protein L11 methyltransferase (317 aa).

The S-adenosyl-L-methionine site is built by Thr158, Gly179, Asp201, and Asn244.

This sequence belongs to the methyltransferase superfamily. PrmA family.

It is found in the cytoplasm. The catalysed reaction is L-lysyl-[protein] + 3 S-adenosyl-L-methionine = N(6),N(6),N(6)-trimethyl-L-lysyl-[protein] + 3 S-adenosyl-L-homocysteine + 3 H(+). Functionally, methylates ribosomal protein L11. In Streptococcus equi subsp. zooepidemicus (strain H70), this protein is Ribosomal protein L11 methyltransferase.